A 1002-amino-acid chain; its full sequence is ATP-dependent DNA helicase MPH1 (1002 aa).

One can recognise a Helicase ATP-binding domain in the interval 108-275 (IVRCALFENV…EVVNNLHISK (168 aa)). 121–128 (IPTGTGKT) lines the ATP pocket. Residues 223–226 (DEAH) carry the DEAH box motif. The 164-residue stretch at 506–669 (DEETYIRKNK…ALEYTKSDRI (164 aa)) folds into the Helicase C-terminal domain. A compositionally biased stretch (basic and acidic residues) spans 531–551 (ENRVEEEKKRQKEQAKLERTG). Disordered regions lie at residues 531–569 (ENRV…NQKQ) and 799–843 (AKSQ…DSHT). Positions 553–568 (RTGSSEEAQLSGMNQK) are enriched in polar residues.

It belongs to the DEAD box helicase family. DEAH subfamily. FANCM sub-subfamily. Interacts with the MHF histone-fold complex to form the FANCM-MHF complex.

It is found in the nucleus. It carries out the reaction ATP + H2O = ADP + phosphate + H(+). Its function is as follows. ATP-dependent DNA helicase involved in DNA damage repair by homologous recombination and in genome maintenance. Capable of unwinding D-loops. Plays a role in limiting crossover recombinants during mitotic DNA double-strand break (DSB) repair. Component of a FANCM-MHF complex which promotes gene conversion at blocked replication forks, probably by reversal of the stalled fork. The protein is ATP-dependent DNA helicase MPH1 of Kluyveromyces lactis (strain ATCC 8585 / CBS 2359 / DSM 70799 / NBRC 1267 / NRRL Y-1140 / WM37) (Yeast).